Consider the following 351-residue polypeptide: DNA polymerase IV (351 aa).

The UmuC domain occupies 4–185 (IIHVDMDCFF…LPLAKIPGVG (182 aa)). The Mg(2+) site is built by D8 and D103. E104 is a catalytic residue.

It belongs to the DNA polymerase type-Y family. As to quaternary structure, monomer. Mg(2+) serves as cofactor.

Its subcellular location is the cytoplasm. It catalyses the reaction DNA(n) + a 2'-deoxyribonucleoside 5'-triphosphate = DNA(n+1) + diphosphate. Its function is as follows. Poorly processive, error-prone DNA polymerase involved in untargeted mutagenesis. Copies undamaged DNA at stalled replication forks, which arise in vivo from mismatched or misaligned primer ends. These misaligned primers can be extended by PolIV. Exhibits no 3'-5' exonuclease (proofreading) activity. May be involved in translesional synthesis, in conjunction with the beta clamp from PolIII. This chain is DNA polymerase IV, found in Escherichia coli O157:H7.